Reading from the N-terminus, the 259-residue chain is (3R)-3-hydroxyacyl-CoA dehydrogenase (259 aa).

NAD(+) is bound by residues leucine 13–isoleucine 21 and aspartate 40–leucine 41. At serine 58 the chain carries Phosphoserine. Position 66 is an N6-acetyllysine (lysine 66). Alanine 72–valine 74 serves as a coordination point for NAD(+). Serine 154 is a binding site for substrate. Lysine 158 is subject to N6-succinyllysine. Residue tyrosine 167 is the Proton acceptor of the active site. NAD(+) is bound by residues tyrosine 167 to lysine 171 and isoleucine 200 to threonine 202. Lysine 171 carries the post-translational modification N6-succinyllysine.

Belongs to the short-chain dehydrogenases/reductases (SDR) family. Heterotetramer with CBR4; contains two molecules of HSD17B8 and CBR4. As to expression, kidney, liver, testis, ovary and spleen. Oviduct, uterus, mammary gland, vagina, prostate, clitoral gland and moderately heart, dorsal skin, brain and lung.

It is found in the mitochondrion matrix. It catalyses the reaction a (3R)-3-hydroxyacyl-CoA + NAD(+) = a 3-oxoacyl-CoA + NADH + H(+). The catalysed reaction is 17beta-estradiol + NAD(+) = estrone + NADH + H(+). It carries out the reaction testosterone + NAD(+) = androst-4-ene-3,17-dione + NADH + H(+). The enzyme catalyses 17beta-hydroxy-5alpha-androstan-3-one + NAD(+) = 5alpha-androstan-3,17-dione + NADH + H(+). Its pathway is lipid metabolism; fatty acid biosynthesis. It participates in steroid biosynthesis; estrogen biosynthesis. The protein operates within lipid metabolism; mitochondrial fatty acid beta-oxidation. Its function is as follows. Required for the solubility and assembly of the heterotetramer 3-ketoacyl-[acyl carrier protein] (ACP) reductase functional complex (KAR or KAR1) that forms part of the mitochondrial fatty acid synthase (mtFAS). Alpha-subunit of the KAR complex, acts as scaffold protein, required for the stability of carbonyl reductase type-4 (CBR4, beta-subunit of the KAR complex) and for its 3-ketoacyl-ACP reductase activity, thereby participating in mitochondrial fatty acid biosynthesis. Catalyzes the NAD-dependent conversion of (3R)-3-hydroxyacyl-CoA into 3-ketoacyl-CoA (3-oxoacyl-CoA) with no chain length preference, this enzymatic activity is not needed for the KAR function. Prefers (3R)-3-hydroxyacyl-CoA over (3S)-3-hydroxyacyl-CoA and displays enzymatic activity only in the presence of NAD(+)(H). Cooperates with enoyl-CoA hydratase 1 in mitochondria, together they constitute an alternative route to the auxiliary enzyme pathways for the breakdown of Z-PUFA (cis polyunsaturated fatty acid) enoyl-esters. NAD-dependent 17-beta-hydroxysteroid dehydrogenase with highest activity towards estradiol. It efficiently catalyzes the oxidation of estradiol (E2), testosterone, and dihydrotestosterone. Primarily an oxidative enzyme, it can switch to a reductive mode determined in the appropriate physiologic milieu and catalyze the reduction of estrone (E1) to form biologically active estradiol (E2). This is (3R)-3-hydroxyacyl-CoA dehydrogenase (Hsd17b8) from Mus musculus (Mouse).